The sequence spans 75 residues: UPF0235 protein Mflv_3569 (75 aa).

The protein belongs to the UPF0235 family.

This Mycolicibacterium gilvum (strain PYR-GCK) (Mycobacterium gilvum (strain PYR-GCK)) protein is UPF0235 protein Mflv_3569.